Here is a 376-residue protein sequence, read N- to C-terminus: Response regulator aspartate phosphatase H (376 aa).

6 TPR repeats span residues Tyr99–Val132, Ala139–His172, Ile180–Ile213, Ala220–Lys253, Pro259–Arg292, and Glu334–Ile367.

It belongs to the Rap family. As to quaternary structure, homodimer. Interacts with phosphorylated Spo0F. Each RapH protomer is bound to a monomer of Spo0F, forming a heterotetrameric complex. May also interact with non-phosphorylated Spo0F to inhibit the sporulation phosphorelay. Interacts with the C-terminal DNA-binding region of ComA. Does not interact with DegU.

It is found in the cytoplasm. With respect to regulation, both activities are inhibited by RapH. Dual specificity regulatory protein that can control both sporulation and competence by acting on two distinct response regulators: Spo0F and ComA, respectively. Is involved in the temporal separation of competence and sporulation. Acts as a phosphatase that specifically dephosphorylates the sporulation initiation phosphotransferase Spo0F and inhibits its activity. RapH can also antagonize sporulation by sterically blocking phosphoryl transfer to and from Spo0F. In addition, inhibits the activity of ComA, a transcriptional factor that regulates the development of genetic competence. Acts by binding to ComA, leading to the inhibition of its DNA-binding activity. The chain is Response regulator aspartate phosphatase H (rapH) from Bacillus subtilis (strain 168).